Here is a 352-residue protein sequence, read N- to C-terminus: Nuclear receptor subfamily 1 group I member 3 (352 aa).

A DNA-binding region (nuclear receptor) is located at residues 8–83 (LRNCVVCGDQ…AGMRKDMILS (76 aa)). The NR C4-type zinc-finger motif lies at 11–31 (CVVCGDQATGYHFNALTCEGC). Thr-38 is subject to Phosphothreonine; by PKC. The NR C4-type zinc-finger motif lies at 47–71 (CPFAGSCEVSKTQRRHCPACRLQKC). Positions 109–352 (EQEELIRTLL…MMPLLQEICS (244 aa)) constitute an NR LBD domain.

Belongs to the nuclear hormone receptor family. NR1 subfamily. As to quaternary structure, interacts with ECT2. Heterodimer of NR1I3 and RXR. Interacts with PSMC4. Directly interacts with DNAJC7. The DNAJC7-NR1I3 complex may also include HSP90. Interacts with CRY1. Interacts with CRY2 in a ligand-dependent manner. Phosphorylated at Thr-38 by PKC, dephosphorylation of Thr-38 is required for nuclear translocation and activation. Predominantly expressed in liver.

It is found in the nucleus. The protein resides in the cytoplasm. It localises to the cytoskeleton. Binds and transactivates the retinoic acid response elements that control expression of the retinoic acid receptor beta 2 and alcohol dehydrogenase 3 genes. Transactivates both the phenobarbital responsive element module of the human CYP2B6 gene and the CYP3A4 xenobiotic response element. In Homo sapiens (Human), this protein is Nuclear receptor subfamily 1 group I member 3 (NR1I3).